Consider the following 517-residue polypeptide: Serine hydroxymethyltransferase 2, mitochondrial (517 aa).

The N-terminal 31 residues, 1–31, are a transit peptide targeting the mitochondrion; that stretch reads MAMASALRRLSSSSNKPLQRLFNGGHLYSMS. Lysine 287 bears the N6-(pyridoxal phosphate)lysine mark.

This sequence belongs to the SHMT family. Homotetramer. Requires pyridoxal 5'-phosphate as cofactor.

The protein resides in the mitochondrion. The catalysed reaction is (6R)-5,10-methylene-5,6,7,8-tetrahydrofolate + glycine + H2O = (6S)-5,6,7,8-tetrahydrofolate + L-serine. It participates in one-carbon metabolism; tetrahydrofolate interconversion. Catalyzes the interconversion of serine and glycine. The chain is Serine hydroxymethyltransferase 2, mitochondrial from Flaveria pringlei.